Reading from the N-terminus, the 124-residue chain is Seripauperin-15 (124 aa).

Positions 1 to 20 (MVKLTSIAAGVAAIAAGVAA) are cleaved as a signal peptide.

It belongs to the SRP1/TIP1 family. Seripauperin subfamily.

This chain is Seripauperin-15 (PAU15), found in Saccharomyces cerevisiae (strain ATCC 204508 / S288c) (Baker's yeast).